Consider the following 156-residue polypeptide: Small ribosomal subunit protein uS7 (156 aa).

This sequence belongs to the universal ribosomal protein uS7 family. As to quaternary structure, part of the 30S ribosomal subunit. Contacts proteins S9 and S11.

Functionally, one of the primary rRNA binding proteins, it binds directly to 16S rRNA where it nucleates assembly of the head domain of the 30S subunit. Is located at the subunit interface close to the decoding center, probably blocks exit of the E-site tRNA. This is Small ribosomal subunit protein uS7 from Paracoccus denitrificans (strain Pd 1222).